A 464-amino-acid polypeptide reads, in one-letter code: Chaperone SurA (464 aa).

A signal peptide spans 1–25 (MTRYFSIVLSLLLAVSCVFLPVASA). PpiC domains follow at residues 175–277 (GAQY…KLVE) and 292–391 (ATEY…QRLG). A disordered region spans residues 439 to 464 (PADDHQTPSAAVIPATGAVLPSATKH).

The protein localises to the periplasm. The catalysed reaction is [protein]-peptidylproline (omega=180) = [protein]-peptidylproline (omega=0). Functionally, chaperone involved in the correct folding and assembly of outer membrane proteins. Recognizes specific patterns of aromatic residues and the orientation of their side chains, which are found more frequently in integral outer membrane proteins. May act in both early periplasmic and late outer membrane-associated steps of protein maturation. This is Chaperone SurA from Xylella fastidiosa (strain 9a5c).